A 322-amino-acid polypeptide reads, in one-letter code: Deoxyhypusine hydroxylase (322 aa).

Positions 78, 79, 111, and 112 each coordinate Fe cation. 4 HEAT-like PBS-type repeats span residues valine 109–asparagine 135, leucine 203–aspartate 229, phenylalanine 234–arginine 260, and valine 267–aspartate 293. Positions 236, 237, 269, and 270 each coordinate Fe cation.

Belongs to the deoxyhypusine hydroxylase family. It depends on Fe(2+) as a cofactor.

The protein resides in the cytoplasm. Its subcellular location is the nucleus. It catalyses the reaction [eIF5A protein]-deoxyhypusine + AH2 + O2 = [eIF5A protein]-hypusine + A + H2O. It participates in protein modification; eIF5A hypusination. Functionally, catalyzes the hydroxylation of the N(6)-(4-aminobutyl)-L-lysine intermediate to form hypusine, an essential post-translational modification only found in mature eIF-5A factor. This is Deoxyhypusine hydroxylase from Candida glabrata (strain ATCC 2001 / BCRC 20586 / JCM 3761 / NBRC 0622 / NRRL Y-65 / CBS 138) (Yeast).